Here is a 291-residue protein sequence, read N- to C-terminus: MTRREGLAALLGESAKLAQGPVVGHTSTLRVDQLRAGSQQPRRQFGTEGLTELAASIQSQGILQPLLVRAVGDTYEIVAGERRWRAAQLAGLTEVPVIVKSLTDQEAAVIALIENLQRENLNLIDEVEGKLLLVANALGIASEQARSRLNELLRNPVPEDVETLSAVFLPLGRESWQSFAKNKVRILNYPPPLVEALRQGMALTMATLIARAPENKQADLIAKVQQGAGRKEIVAEVERLCHRPTVRLEKRVAQALGNQKWLDRLDPQDAEAMQHWLSQMPRALQQEIGDN.

It belongs to the ParB family.

The sequence is that of Probable plasmid-partitioning protein ParB from Deinococcus radiodurans (strain ATCC 13939 / DSM 20539 / JCM 16871 / CCUG 27074 / LMG 4051 / NBRC 15346 / NCIMB 9279 / VKM B-1422 / R1).